We begin with the raw amino-acid sequence, 466 residues long: Ras-GEF domain-containing family member 1C (466 aa).

The interval 1 to 37 is disordered; the sequence is MPQTLSASDMVTPGSLSPPPTEPTDGEQAGQPLLDGA. In terms of domain architecture, N-terminal Ras-GEF spans 34–164; it reads LDGAPSSASL…LLQALHQKLA (131 aa). Residues 200–446 enclose the Ras-GEF domain; the sequence is DPYTLAQQLT…YLASYESESP (247 aa).

Guanine nucleotide exchange factor (GEF). This Homo sapiens (Human) protein is Ras-GEF domain-containing family member 1C (RASGEF1C).